The following is an 89-amino-acid chain: Small ribosomal subunit protein uS15 (89 aa).

Basic and acidic residues predominate over residues 1–11 (MSITAERKAEV). Residues 1-24 (MSITAERKAEVIKTSATKAGDTGS) are disordered.

Belongs to the universal ribosomal protein uS15 family. As to quaternary structure, part of the 30S ribosomal subunit. Forms a bridge to the 50S subunit in the 70S ribosome, contacting the 23S rRNA.

Its function is as follows. One of the primary rRNA binding proteins, it binds directly to 16S rRNA where it helps nucleate assembly of the platform of the 30S subunit by binding and bridging several RNA helices of the 16S rRNA. Functionally, forms an intersubunit bridge (bridge B4) with the 23S rRNA of the 50S subunit in the ribosome. This is Small ribosomal subunit protein uS15 from Rhodopseudomonas palustris (strain TIE-1).